The primary structure comprises 345 residues: Methylthioribose-1-phosphate isomerase 2 (345 aa).

Residues 47 to 49, R88, and Q194 contribute to the substrate site; that span reads RGA. Residue D235 is the Proton donor of the active site. Position 245-246 (245-246) interacts with substrate; sequence NK.

The protein belongs to the eIF-2B alpha/beta/delta subunits family. MtnA subfamily.

It catalyses the reaction 5-(methylsulfanyl)-alpha-D-ribose 1-phosphate = 5-(methylsulfanyl)-D-ribulose 1-phosphate. It participates in amino-acid biosynthesis; L-methionine biosynthesis via salvage pathway; L-methionine from S-methyl-5-thio-alpha-D-ribose 1-phosphate: step 1/6. In terms of biological role, catalyzes the interconversion of methylthioribose-1-phosphate (MTR-1-P) into methylthioribulose-1-phosphate (MTRu-1-P). This chain is Methylthioribose-1-phosphate isomerase 2, found in Pseudothermotoga lettingae (strain ATCC BAA-301 / DSM 14385 / NBRC 107922 / TMO) (Thermotoga lettingae).